The chain runs to 754 residues: Zinc finger protein with KRAB and SCAN domains 7 (754 aa).

A Glycyl lysine isopeptide (Lys-Gly) (interchain with G-Cter in SUMO2) cross-link involves residue Lys-28. The region spanning 54–136 is the SCAN box domain; sequence RLHFRQLCYH…AVVEDFQRHL (83 aa). The disordered stretch occupies residues 157–215; the sequence is TALGTTKESPPTSPLSGGSAPGAHLEPPYDPGTHHLPSGDFAQCTSPVPTLPQVGNSGD. Composition is skewed to polar residues over residues 158 to 172 and 199 to 215; these read ALGTTKESPPTSPLS and QCTSPVPTLPQVGNSGD. One can recognise a KRAB domain in the interval 231–306; that stretch reads VAYEDLSVDY…TSGGLFGVVP (76 aa). 10 C2H2-type zinc fingers span residues 383–405, 411–433, 439–461, 467–489, 495–517, 523–545, 551–573, 579–601, 607–629, and 635–657; these read YRCDECGKAFNRSSHLIGHQRIH, YECNECGKTFRQTSQLIVHLRTH, YECSECGKAYRHSSHLIQHQRLH, YKCNECAKAFTQSSRLTDHQRTH, YECNECGEAFIRSKSLARHQVLH, YKCNECGRAFCSNRNLIDHQRIH, YECSECGKAFSRSKCLIRHQSLH, YKCSECGKAFNQNSQLIEHERIH, FECSECGKAFGLSKCLIRHQRLH, and YKCNECGKSFNQNSHLIIHQRIH. Residues 663–685 form a C2H2-type 11; degenerate zinc finger; that stretch reads YECNECGKVFSYSSSLMVHQRTH. 2 C2H2-type zinc fingers span residues 691–713 and 719–741; these read YKCNDCGKAFSDSSQLIVHQRVH and YECSECGKAFSQRSTFNHHQRTH. The segment at 735–754 is disordered; the sequence is NHHQRTHTGEKSSGLAWSVS.

The protein belongs to the krueppel C2H2-type zinc-finger protein family.

The protein localises to the nucleus. Functionally, may be involved in transcriptional regulation. In Homo sapiens (Human), this protein is Zinc finger protein with KRAB and SCAN domains 7 (ZKSCAN7).